The primary structure comprises 679 residues: E3 ubiquitin ligase RNF157 (679 aa).

A lipid anchor (N-myristoyl glycine) is attached at Gly-2. The segment at 277–316 (CVVCLSDVRDTLILPCRHLCLCNTCADTLRYQANNCPICR) adopts an RING-type zinc-finger fold. Residues 329–332 (RKKL) carry the D-box 1 motif. Polar residues-rich tracts occupy residues 339 to 349 (SFNPIISSQTS) and 478 to 537 (ESEN…SMSG). 3 disordered regions span residues 339-362 (SFNP…NIPP), 416-604 (LDRL…TQEG), and 650-679 (VSRN…PLAV). The segment covering 585-598 (QDAEGNDVIEEEDG) has biased composition (acidic residues). Residues 656–659 (RRRL) carry the D-box 2 motif. Residues Ser-660, Ser-661, Ser-662, and Ser-663 each carry the phosphoserine modification.

In terms of assembly, interacts with APBB1. Interacts with CHD1; CHD1-binding controls RNF157 stability. Interacts with ATRN, MEGF8, TECR, MSI2, PLRG1, BYSL, MTERF3, PSMA1, MRPS18B, PRPF4, FASTKD2, SLC25A1, SMU1, CNOT9, MRPS2, MAGT1, FXR2, EMD, PSMD8, HDAC1, RAN, HSD17B12, TXNDC5 and MRPL19. Phosphorylation at Ser-660, Ser-661, Ser-662 and Ser-663 downstream of the PI3K and MAPK pathways influences the E3 ligase activity and stability of RNF157 during the cell cycle in an anaphase-promoting complex/cyclosome-CDH1-dependent manner.

It is found in the cytoplasm. The enzyme catalyses S-ubiquitinyl-[E2 ubiquitin-conjugating enzyme]-L-cysteine + [acceptor protein]-L-lysine = [E2 ubiquitin-conjugating enzyme]-L-cysteine + N(6)-ubiquitinyl-[acceptor protein]-L-lysine.. E3 ubiquitin ligase that ubiquitinates APBB1 for its degradation by the proteasome and thus prevents apoptosis and promotes survival of neurons. Has a dual role in neurons as it is also required for dendrite growth and maintenance for which its ligase activity is not critical. May act as a scaffold molecule to regulate this process. Acts as a downstream effector of the interconnected PI3K and MAPK signaling pathways and thus participates in the regulation of the cell cycle. The protein is E3 ubiquitin ligase RNF157 (RNF157) of Homo sapiens (Human).